We begin with the raw amino-acid sequence, 436 residues long: Prenyltransferase nscD (436 aa).

It belongs to the tryptophan dimethylallyltransferase family.

It functions in the pathway secondary metabolite biosynthesis. Functionally, prenyltransferase; part of the gene cluster that mediates the biosynthesis of neosartoricin B, a prenylated anthracenone that probably exhibits T-cell antiproliferative activity, suggestive of a physiological role as an immunosuppressive agent. The non-reducing polyketide synthase nscA probably synthesizes and cyclizes the decaketide backbone. The hydrolase nscB then mediates the product release through hydrolysis followed by spontaneous decarboxylation. The prenyltransferase nscD catalyzes the addition of the dimethylallyl group to the aromatic C5. The FAD-dependent monooxygenase nscC is then responsible for the stereospecific hydroxylation at C2. Neosartoricin B can be converted into two additional compounds neosartoricins C and D. Neosartoricin C is a spirocyclic compound that is cyclized through the attack of C3 hydroxyl on C14, followed by dehydration. On the other hand, neosartoricin D is a further cyclized compound in which attack of C2 on C14 in neosartoricin C results in the formation of the acetal-containing dioxabicyclo-octanone ring. Both of these compounds are novel and possibly represent related metabolites of the gene cluster. The polypeptide is Prenyltransferase nscD (Trichophyton equinum (strain ATCC MYA-4606 / CBS 127.97) (Horse ringworm fungus)).